We begin with the raw amino-acid sequence, 381 residues long: Succinyl-diaminopimelate desuccinylase 1 (381 aa).

Zn(2+) is bound at residue histidine 70. Aspartate 72 is a catalytic residue. Residue aspartate 103 coordinates Zn(2+). Residue glutamate 136 is the Proton acceptor of the active site. Residues glutamate 137, glutamate 165, and histidine 354 each coordinate Zn(2+).

It belongs to the peptidase M20A family. DapE subfamily. Homodimer. Requires Zn(2+) as cofactor. It depends on Co(2+) as a cofactor.

The catalysed reaction is N-succinyl-(2S,6S)-2,6-diaminopimelate + H2O = (2S,6S)-2,6-diaminopimelate + succinate. It functions in the pathway amino-acid biosynthesis; L-lysine biosynthesis via DAP pathway; LL-2,6-diaminopimelate from (S)-tetrahydrodipicolinate (succinylase route): step 3/3. Catalyzes the hydrolysis of N-succinyl-L,L-diaminopimelic acid (SDAP), forming succinate and LL-2,6-diaminopimelate (DAP), an intermediate involved in the bacterial biosynthesis of lysine and meso-diaminopimelic acid, an essential component of bacterial cell walls. The protein is Succinyl-diaminopimelate desuccinylase 1 of Ruegeria sp. (strain TM1040) (Silicibacter sp.).